Consider the following 117-residue polypeptide: Large ribosomal subunit protein bL20 (117 aa).

It belongs to the bacterial ribosomal protein bL20 family.

In terms of biological role, binds directly to 23S ribosomal RNA and is necessary for the in vitro assembly process of the 50S ribosomal subunit. It is not involved in the protein synthesizing functions of that subunit. This is Large ribosomal subunit protein bL20 from Vibrio metschnikovii.